The chain runs to 506 residues: Heat stress transcription factor A-1 (506 aa).

Residues 157–207 (MEEEIEMLKRDKNVLMQELVRLRQQQQTTDHQLQTLGKRLQGMEQRQQQMM) adopt a coiled-coil conformation. Residues 164–214 (LKRDKNVLMQELVRLRQQQQTTDHQLQTLGKRLQGMEQRQQQMMSFLAKAM) form a hydrophobic repeat HR-A/B region. Residues 231-254 (RRRIVASNKKRRLPKQDGSLDSES) are disordered. A compositionally biased stretch (basic residues) spans 232-243 (RRIVASNKKRRL). Positions 239 to 242 (KKRR) match the Nuclear localization signal motif. The short motif at 449 to 456 (DSFWEQFL) is the AHA element.

Belongs to the HSF family. Class A subfamily. In terms of assembly, homotrimer. In terms of processing, exhibits temperature-dependent phosphorylation.

It localises to the nucleus. Its function is as follows. Transcriptional regulator that specifically binds DNA of heat shock promoter elements (HSE). The sequence is that of Heat stress transcription factor A-1 (HSFA1) from Oryza sativa subsp. japonica (Rice).